The following is an 888-amino-acid chain: Calcium-transporting ATPase 1 (888 aa).

4 consecutive transmembrane segments (helical) span residues 53–75 (IFAQ…SAFV), 79–97 (ADAS…IGVV), 246–266 (VGKY…LIGF), and 283–303 (AVAA…AIGV). Ca(2+) is bound by residues Val-284, Ala-285, Ile-287, and Glu-289. The active-site 4-aspartylphosphate intermediate is the Asp-331. The next 6 helical transmembrane spans lie at 675-695 (ILFL…AILL), 703-723 (PIHI…SLGV), 747-767 (VPFL…AFIA), 791-811 (LLHA…VHSF), 831-851 (LVFS…IPPL), and 865-885 (WGFV…IKLA). Ca(2+) contacts are provided by Asn-710 and Asp-714.

The protein belongs to the cation transport ATPase (P-type) (TC 3.A.3) family. Type IIA subfamily.

Its subcellular location is the cell membrane. It catalyses the reaction Ca(2+)(in) + ATP + H2O = Ca(2+)(out) + ADP + phosphate + H(+). Inhibited by cyclopiazonic acid (CPA). Its function is as follows. Catalyzes the hydrolysis of ATP coupled with the transport of calcium. This chain is Calcium-transporting ATPase 1, found in Bacillus cereus (strain ATCC 10987 / NRS 248).